A 533-amino-acid chain; its full sequence is Calcium-dependent protein kinase 12 (533 aa).

The interval 1 to 77 (MGNCFTKTYE…RASGGGGEMG (77 aa)) is disordered. Residue glycine 2 is the site of N-myristoyl glycine attachment. Basic and acidic residues predominate over residues 26 to 38 (ERSKARGGDEPGT). Residues 57–69 (GSSSAAGALSRRA) are compositionally biased toward low complexity. The 259-residue stretch at 91–349 (YQLDRKLGSG…ASQALEHRWL (259 aa)) folds into the Protein kinase domain. Residues 97–105 (LGSGQFGTT) and lysine 120 contribute to the ATP site. Aspartate 215 acts as the Proton acceptor in catalysis. Residues 354–384 (ASDRPIDSAVLSRMKQFKAMNKLKQLALKVI) are autoinhibitory domain. EF-hand domains lie at 391-426 (EEIK…LGSR), 427-462 (ISEA…KHKL), 463-498 (EKEE…YGMG), and 499-533 (DEAN…GIQT). Positions 404, 406, 408, 410, 415, 440, 442, 444, 446, 451, 476, 478, 480, 482, 487, 511, 513, 515, 517, and 522 each coordinate Ca(2+).

This sequence belongs to the protein kinase superfamily. Ser/Thr protein kinase family. CDPK subfamily. Expressed in roots, leaf blades and developing seeds. Expressed in vascular tissues of roots and leaf blades. Expressed in the phloem tissue of the large vascular bundle in leaf blades.

Its subcellular location is the membrane. The enzyme catalyses L-seryl-[protein] + ATP = O-phospho-L-seryl-[protein] + ADP + H(+). It catalyses the reaction L-threonyl-[protein] + ATP = O-phospho-L-threonyl-[protein] + ADP + H(+). Activated by calcium. Autophosphorylation may play an important role in the regulation of the kinase activity. May play a role in signal transduction pathways that involve calcium as a second messenger. Functions in signal transduction pathways that positively regulate responses to low-nitrogen. Functions in multiple signaling pathways, positively regulating salt tolerance and negatively modulating rice blast fungus resistance. May promote tolerance to salt stress by negatively regulating NADPH oxidase and positively regulating reactive oxygen species (ROS) scavengers. This is Calcium-dependent protein kinase 12 from Oryza sativa subsp. japonica (Rice).